The sequence spans 312 residues: Aquaporin-6 (312 aa).

The Cytoplasmic segment spans residues 1-50; it reads MDDKFDDDALPNSKTTAKDYEDKLPEYDYTTTFPNTWMRLREPFREYFAE. The helical transmembrane segment at 51 to 71 threads the bilayer; sequence FVGVAVLIIFGVGADCQVVLS. The Extracellular segment spans residues 72-89; sequence ANTGVASSPKGSYLSLNC. A helical transmembrane segment spans residues 90-110; it reads GWAIGTAMGVWISGGISGGHI. The short motif at 111-113 is the NPA 1 element; that stretch reads NPA. The Cytoplasmic portion of the chain corresponds to 111–128; the sequence is NPAVTLAMATWRGFPWWK. A helical membrane pass occupies residues 129 to 149; that stretch reads VPGFIFAQLLGGIVGAGLVYV. The Extracellular segment spans residues 150 to 183; it reads NYIHAIDIVEGGRHIRTLDTAGLFATYAADYMTN. Asn-183 carries N-linked (GlcNAc...) asparagine glycosylation. Residues 184–204 traverse the membrane as a helical segment; the sequence is LSCFFSEFLATAVLIIVIHAM. Residues 205-213 are Cytoplasmic-facing; the sequence is NDKRNTPPP. A helical membrane pass occupies residues 214–234; the sequence is AGIVPFVLFFLILGIGASLGM. At 235–267 the chain is on the extracellular side; it reads ETGYAINPARDLGPRMLTAMVGYGRQVFAFRNQ. An NPA 2 motif is present at residues 241 to 243; that stretch reads NPA. Residues 268–288 traverse the membrane as a helical segment; it reads YWIWCPVLAPFLGAQVGTIFY. Over 289–312 the chain is Cytoplasmic; the sequence is DLFFYKGQDNVFGRLGSHIHISPA.

Belongs to the MIP/aquaporin (TC 1.A.8) family.

Its subcellular location is the membrane. The catalysed reaction is H2O(in) = H2O(out). Its function is as follows. Water channel required to facilitate the transport of water across membranes. Does not mediate the transport carbon dioxide nor nitric oxide across the membrane. Plays a key role in root water transport of mycorrhizal plant such ectomycorrhizal white spruce or trembling aspen via the hydration at the hyphal-root interphase. Contributes in fungal cellular processes during the basidiocarp formation. This is Aquaporin-6 from Laccaria bicolor (Bicoloured deceiver).